A 1079-amino-acid chain; its full sequence is Extracellular calcium-sensing receptor (1079 aa).

An N-terminal signal peptide occupies residues 1 to 19 (MAWFGYCLALLALTWHSSA). The Extracellular segment spans residues 20 to 610 (YGPDQRAQKK…KEIEFLAWTE (591 aa)). The interval 22–188 (PDQRAQKKGD…QFKSFLRTIP (167 aa)) is ligand-binding 1 (LB1). A disulfide bridge connects residues Cys-60 and Cys-101. 66–70 (RGFRW) contacts phosphate. Ile-81, Ser-84, Leu-87, and Leu-88 together coordinate Ca(2+). Asn-90 is a glycosylation site (N-linked (GlcNAc...) asparagine). Ca(2+) is bound at residue Thr-100. Residue Asn-130 is glycosylated (N-linked (GlcNAc...) asparagine). Position 145 (Thr-145) interacts with Ca(2+). Positions 147, 168, and 170 each coordinate L-tryptophan. Ca(2+) is bound by residues Ser-170, Pro-188, Asp-190, Glu-231, and Asp-234. The ligand-binding 2 (LB2) stretch occupies residues 189 to 324 (NDEHQATAMA…GGTIGFGLKA (136 aa)). 7 disulfide bridges follow: Cys-236/Cys-561, Cys-358/Cys-395, Cys-437/Cys-449, Cys-542/Cys-562, Cys-546/Cys-565, Cys-568/Cys-582, and Cys-585/Cys-598. Spermine-binding residues include Asp-238 and Ser-240. N-linked (GlcNAc...) asparagine glycans are attached at residues Asn-261 and Asn-287. Glu-297 lines the Ca(2+) pocket. Glu-297 contributes to the L-tryptophan binding site. The N-linked (GlcNAc...) asparagine glycan is linked to Asn-386. Phosphate is bound at residue 415–417 (RIS). N-linked (GlcNAc...) asparagine glycosylation is found at Asn-446, Asn-468, and Asn-488. Residue Tyr-489 participates in Ca(2+) binding. An N-linked (GlcNAc...) asparagine glycan is attached at Asn-541. The cysteine-rich (CR) stretch occupies residues 542 to 612 (CSRDCQAGTR…IEFLAWTEPF (71 aa)). Position 557 (Gly-557) interacts with Ca(2+). N-linked (GlcNAc...) asparagine glycosylation is present at Asn-594. The helical transmembrane segment at 611-636 (PFGIALTLFAVLGIFLTAFVLGVFIK) threads the bilayer. Over 637-648 (FRNTPIVKATNR) the chain is Cytoplasmic. Residues 637 to 648 (FRNTPIVKATNR) are intracellular loop 1 (ICL1). A helical membrane pass occupies residues 649–668 (ELSYLLLFSLLCCFSSSLFF). The Extracellular portion of the chain corresponds to 669 to 674 (IGEPQD). A helical membrane pass occupies residues 675–698 (WTCRLRQPAFGISFVLCISCILVK). Residues 699 to 722 (TNRVLLVFEAKIPTSFHRKWWGLN) are Cytoplasmic-facing. The intracellular loop 2 (ICL2) stretch occupies residues 699–722 (TNRVLLVFEAKIPTSFHRKWWGLN). The helical transmembrane segment at 723-745 (LQFLLVFLCTFMQIVICIIWLYT) threads the bilayer. Residues 746–769 (APPSSYRNHELEDEIIFITCHEGS) are Extracellular-facing. Residues 770–789 (LMALGSLIGYTCLLAAICFF) traverse the membrane as a helical segment. At 790–805 (FAFKSRKLPENFNEAK) the chain is on the cytoplasmic side. Residues 790–805 (FAFKSRKLPENFNEAK) are intracellular loop 3 (ICL3). The chain crosses the membrane as a helical span at residues 806-828 (FITFSMLIFFIVWISFIPAYAST). The Extracellular portion of the chain corresponds to 829–832 (YGKF). Residues 833 to 854 (VSAVEVIAILAASFGLLACIFF) traverse the membrane as a helical segment. The Cytoplasmic portion of the chain corresponds to 855 to 1079 (NKVYIILFKP…SSVTENILHS (225 aa)). The tract at residues 855–1079 (NKVYIILFKP…SSVTENILHS (225 aa)) is C-terminus. Residues 880–900 (AFKVAARATLRRPNISRKRSS) form an interaction with RNF19A region. Thr-888 is subject to Phosphothreonine. The tract at residues 890 to 898 (RRPNISRKR) is arginine-rich retention motif. The disordered stretch occupies residues 894 to 964 (ISRKRSSSLG…QQQPQQPRCK (71 aa)). Position 899 is a phosphoserine (Ser-899). Residues 900–918 (SSLGGSTGSIPSSSISSKS) are compositionally biased toward low complexity. Basic and acidic residues predominate over residues 919–931 (NSEDRFPQPERQK). Ser-920 is subject to Phosphoserine. A compositionally biased stretch (low complexity) spans 932–961 (QQQPLALTQQEQQQQPLTLQPQQQQQPQQP). Residue Ser-1062 is modified to Phosphoserine.

This sequence belongs to the G-protein coupled receptor 3 family. As to quaternary structure, homodimer; disulfide-linked. Interacts with VCP. Interacts with ARRB1. Phosphorylation at Thr-888 by PKC impairs coupling with G(q)/G(11) G-proteins, while it does not affect G(i)/G(o)-coupling. Phosphorylation at Ser-899 by PKA promote plasma membrane localization. Post-translationally, ubiquitinated by RNF19A; which induces proteasomal degradation. In terms of tissue distribution, epidermis, kidney and cartilage.

It localises to the cell membrane. In resting state, adopts an open conformation, anion-binding promoting the inactive configuration. Upon aromatic amino acid-binding, the groove in the extracellular venus flytrap module is closed, thereby inducing the formation of a novel homodimer interface between subunits. Calcium ions stabilize the active state by enhancing homodimer interactions between membrane-proximal domains to fully activate the receptor. Upon activation, the homodimer adopts an asymmetric configuration of the 7-transmembrane region that primes one protomer for G-protein coupling. G-protein binding expands the transmembrane dimer interface; the restriction imposed by the receptor dimer, in combination with intracellular loop 2 (ICL2), enables G-protein activation by facilitating conformational transition of G-protein alpha. Coupling to different classes of G-proteins results in distinct CASR-G-protein interfaces. Functionally, G-protein-coupled receptor that senses changes in the extracellular concentration of calcium ions and plays a key role in maintaining calcium homeostasis. Senses fluctuations in the circulating calcium concentration: activated by elevated circulating calcium, leading to decreased parathyroid hormone (PTH) secretion in parathyroid glands. In kidneys, acts as a key regulator of renal tubular calcium resorption. Ligand binding causes a conformation change that triggers signaling via guanine nucleotide-binding proteins (G-proteins) and modulates the activity of downstream effectors. CASR is coupled with different G(q)/G(11), G(i)/G(o)- or G(s)-classes of G-proteins depending on the context. In the parathyroid and kidney, CASR signals through G(q)/G(11) and G(i)/G(o) G-proteins: G(q)/G(11) coupling activates phospholipase C-beta, releasing diacylglycerol (DAG) and inositol 1,4,5-trisphosphate (IP3) second messengers, while G(i)/G(o) coupling mediates inhibition of adenylate cyclase activity. The G-protein-coupled receptor activity is activated by a co-agonist mechanism: aromatic amino acids, such as Trp or Phe, act concertedly with divalent cations, such as calcium or magnesium, to achieve full receptor activation. Acts as an activator of the NLRP3 inflammasome via G(i)/G(o)-mediated signaling: down-regulation of cyclic AMP (cAMP) relieving NLRP3 inhibition by cAMP. Acts as a regulator of proton-sensing receptor GPR68 in a seesaw manner: CASR-mediated signaling inhibits GPR68 signaling in response to extracellular calcium, while GPR68 inhibits CASR in presence of extracellular protons. The sequence is that of Extracellular calcium-sensing receptor from Mus musculus (Mouse).